The sequence spans 249 residues: 2,3,4,5-tetrahydropyridine-2,6-dicarboxylate N-acetyltransferase (249 aa).

This sequence belongs to the transferase hexapeptide repeat family. DapH subfamily.

The catalysed reaction is (S)-2,3,4,5-tetrahydrodipicolinate + acetyl-CoA + H2O = L-2-acetamido-6-oxoheptanedioate + CoA. The protein operates within amino-acid biosynthesis; L-lysine biosynthesis via DAP pathway; LL-2,6-diaminopimelate from (S)-tetrahydrodipicolinate (acetylase route): step 1/3. Catalyzes the transfer of an acetyl group from acetyl-CoA to tetrahydrodipicolinate. This is 2,3,4,5-tetrahydropyridine-2,6-dicarboxylate N-acetyltransferase from Fervidobacterium nodosum (strain ATCC 35602 / DSM 5306 / Rt17-B1).